Reading from the N-terminus, the 137-residue chain is uncharacterized protein (137 aa).

4 helical membrane-spanning segments follow: residues 20-39 (YGKI…GYAV), 44-61 (WFIT…LSLV), 86-105 (VEIF…ALDL), and 109-131 (AALA…YGYY).

The protein resides in the cell membrane. This is an uncharacterized protein from Archaeoglobus fulgidus (strain ATCC 49558 / DSM 4304 / JCM 9628 / NBRC 100126 / VC-16).